Reading from the N-terminus, the 354-residue chain is UDP-3-O-acylglucosamine N-acyltransferase (354 aa).

H258 acts as the Proton acceptor in catalysis.

The protein belongs to the transferase hexapeptide repeat family. LpxD subfamily. As to quaternary structure, homotrimer.

It carries out the reaction a UDP-3-O-[(3R)-3-hydroxyacyl]-alpha-D-glucosamine + a (3R)-hydroxyacyl-[ACP] = a UDP-2-N,3-O-bis[(3R)-3-hydroxyacyl]-alpha-D-glucosamine + holo-[ACP] + H(+). It functions in the pathway bacterial outer membrane biogenesis; LPS lipid A biosynthesis. Catalyzes the N-acylation of UDP-3-O-acylglucosamine using 3-hydroxyacyl-ACP as the acyl donor. Is involved in the biosynthesis of lipid A, a phosphorylated glycolipid that anchors the lipopolysaccharide to the outer membrane of the cell. The polypeptide is UDP-3-O-acylglucosamine N-acyltransferase (Sinorhizobium medicae (strain WSM419) (Ensifer medicae)).